The primary structure comprises 244 residues: Guanine nucleotide exchange factor rei-1 (244 aa).

2 coiled-coil regions span residues 6-39 (DQLI…KKQF) and 81-144 (VQQA…KAEK). Residues 221–244 (DQIHQERSSQSSLAPSSDAESDSS) are disordered. Residues 228–238 (SSQSSLAPSSD) show a composition bias toward low complexity.

Belongs to the SH3BP5 family. Homodimer, tetramer and multimer. Interacts with rab-11.1. Binds preferentially to the GDP-bound form of rab-11.1. Expressed in germ cells.

Its subcellular location is the cytoplasmic granule. It is found in the golgi apparatus membrane. Its function is as follows. Guanine nucleotide exchange factor for Rab GTPase Rab-11.1. Spatially and temporally regulates the distribution of Rab-11.1 to target membranes during embryogenesis. Plays a role in cytokinesis, probably by targeting rab-11.1 to the cleavage furrows. The chain is Guanine nucleotide exchange factor rei-1 from Caenorhabditis elegans.